The chain runs to 1143 residues: DNA-directed RNA polymerase subunit beta (1143 aa).

Belongs to the RNA polymerase beta chain family. As to quaternary structure, in plastids the minimal PEP RNA polymerase catalytic core is composed of four subunits: alpha, beta, beta', and beta''. When a (nuclear-encoded) sigma factor is associated with the core the holoenzyme is formed, which can initiate transcription.

The protein localises to the plastid. It is found in the chloroplast. It carries out the reaction RNA(n) + a ribonucleoside 5'-triphosphate = RNA(n+1) + diphosphate. In terms of biological role, DNA-dependent RNA polymerase catalyzes the transcription of DNA into RNA using the four ribonucleoside triphosphates as substrates. This is DNA-directed RNA polymerase subunit beta from Porphyra purpurea (Red seaweed).